A 100-amino-acid polypeptide reads, in one-letter code: Conantokin-G (100 aa).

The N-terminal stretch at 1–21 (MHLYTYLYLLVPLVTFHLILG) is a signal peptide. Residues 22-80 (TGTLDDGGALTERRSADATALKAEPVLLQKSAARSTDDNGKDRLTQMKRILKQRGNKAR) constitute a propeptide that is removed on maturation. Residues 52–100 (SAARSTDDNGKDRLTQMKRILKQRGNKARGEEELQENQELIREKSNGKR) form a disordered region. Basic and acidic residues predominate over residues 56–66 (STDDNGKDRLT). A gamma-carboxylation recognition sequence that plays a role in the conversion of Glu to carboxy-Glu (Gla) region spans residues 61–80 (GKDRLTQMKRILKQRGNKAR). An a divalent metal cation-binding site is contributed by E83. A 4-carboxyglutamate mark is found at E83, E84, E87, E90, and E94. Residues E87, E90, and E94 each contribute to the a divalent metal cation site. Over residues 90 to 100 (ELIREKSNGKR) the composition is skewed to basic and acidic residues. N97 carries the asparagine amide modification.

This sequence belongs to the conotoxin B superfamily. Ca(2+) is required as a cofactor. Mg(2+) serves as cofactor. As to expression, expressed by the venom duct.

Its subcellular location is the secreted. Functionally, conantokins inhibit N-methyl-D-aspartate (NMDA) receptors. This toxin is selective for the NR2B/GRIN2B subunit. Induces sleep-like symptoms in young mice and hyperactivity in older mice. In Conus geographus (Geography cone), this protein is Conantokin-G.